Here is a 673-residue protein sequence, read N- to C-terminus: UvrABC system protein B (673 aa).

Residues 25 to 413 form the Helicase ATP-binding domain; sequence EGIESGLAHQ…GSDIAEQVVR (389 aa). An ATP-binding site is contributed by 38-45; that stretch reads GVTGSGKT. A Beta-hairpin motif is present at residues 91-114; the sequence is YYDYYQPEAYVPTTDTFIEKDASV. Residues 430-583 enclose the Helicase C-terminal domain; sequence QVDDLLSEIN…QHQYNLDNNI (154 aa). A UVR domain is found at 634-669; it reads DTKIVELEKLMQGHAQNLEFEQAAAMRDKIAKLRIQ.

It belongs to the UvrB family. Forms a heterotetramer with UvrA during the search for lesions. Interacts with UvrC in an incision complex.

It localises to the cytoplasm. The UvrABC repair system catalyzes the recognition and processing of DNA lesions. A damage recognition complex composed of 2 UvrA and 2 UvrB subunits scans DNA for abnormalities. Upon binding of the UvrA(2)B(2) complex to a putative damaged site, the DNA wraps around one UvrB monomer. DNA wrap is dependent on ATP binding by UvrB and probably causes local melting of the DNA helix, facilitating insertion of UvrB beta-hairpin between the DNA strands. Then UvrB probes one DNA strand for the presence of a lesion. If a lesion is found the UvrA subunits dissociate and the UvrB-DNA preincision complex is formed. This complex is subsequently bound by UvrC and the second UvrB is released. If no lesion is found, the DNA wraps around the other UvrB subunit that will check the other stand for damage. The polypeptide is UvrABC system protein B (Colwellia psychrerythraea (strain 34H / ATCC BAA-681) (Vibrio psychroerythus)).